The primary structure comprises 265 residues: Phosphatidylglycerol--prolipoprotein diacylglyceryl transferase (265 aa).

The next 7 membrane-spanning stretches (helical) occupy residues 17–37, 59–79, 94–114, 123–143, 177–197, 204–224, and 238–258; these read LAIR…IWLA, MLFY…VLFY, VWKG…AMSI, VLDV…FGRL, SPLY…WLFA, MAVG…TEYF, and ISAG…MLLI. Residue Arg-142 coordinates a 1,2-diacyl-sn-glycero-3-phospho-(1'-sn-glycerol).

The protein belongs to the Lgt family.

The protein localises to the cell inner membrane. It catalyses the reaction L-cysteinyl-[prolipoprotein] + a 1,2-diacyl-sn-glycero-3-phospho-(1'-sn-glycerol) = an S-1,2-diacyl-sn-glyceryl-L-cysteinyl-[prolipoprotein] + sn-glycerol 1-phosphate + H(+). The protein operates within protein modification; lipoprotein biosynthesis (diacylglyceryl transfer). Catalyzes the transfer of the diacylglyceryl group from phosphatidylglycerol to the sulfhydryl group of the N-terminal cysteine of a prolipoprotein, the first step in the formation of mature lipoproteins. The protein is Phosphatidylglycerol--prolipoprotein diacylglyceryl transferase of Janthinobacterium sp. (strain Marseille) (Minibacterium massiliensis).